A 469-amino-acid polypeptide reads, in one-letter code: Glutamate--tRNA ligase (469 aa).

The short motif at 11–21 (PSPTGFIHLGN) is the 'HIGH' region element. Residues 116-131 (ASGEKPRYDGTWRPEP) are compositionally biased toward basic and acidic residues. The tract at residues 116–139 (ASGEKPRYDGTWRPEPGKVLPTPP) is disordered. The 'KMSKS' region signature appears at 243 to 247 (KMSKR). ATP is bound at residue lysine 246.

This sequence belongs to the class-I aminoacyl-tRNA synthetase family. Glutamate--tRNA ligase type 1 subfamily. Monomer.

Its subcellular location is the cytoplasm. It carries out the reaction tRNA(Glu) + L-glutamate + ATP = L-glutamyl-tRNA(Glu) + AMP + diphosphate. Functionally, catalyzes the attachment of glutamate to tRNA(Glu) in a two-step reaction: glutamate is first activated by ATP to form Glu-AMP and then transferred to the acceptor end of tRNA(Glu). The protein is Glutamate--tRNA ligase of Paraburkholderia phymatum (strain DSM 17167 / CIP 108236 / LMG 21445 / STM815) (Burkholderia phymatum).